Consider the following 137-residue polypeptide: ATP synthase epsilon chain (137 aa).

The protein belongs to the ATPase epsilon chain family. In terms of assembly, F-type ATPases have 2 components, CF(1) - the catalytic core - and CF(0) - the membrane proton channel. CF(1) has five subunits: alpha(3), beta(3), gamma(1), delta(1), epsilon(1). CF(0) has three main subunits: a, b and c.

Its subcellular location is the cellular thylakoid membrane. Produces ATP from ADP in the presence of a proton gradient across the membrane. The chain is ATP synthase epsilon chain (atpC) from Synechococcus elongatus (strain ATCC 33912 / PCC 7942 / FACHB-805) (Anacystis nidulans R2).